Here is a 218-residue protein sequence, read N- to C-terminus: Pyridoxine/pyridoxamine 5'-phosphate oxidase (218 aa).

Substrate contacts are provided by residues 14-17 (RREY) and lysine 72. FMN contacts are provided by residues 67 to 72 (RIVLLK), 82 to 83 (YT), arginine 88, lysine 89, and glutamine 111. Substrate-binding residues include tyrosine 129, arginine 133, and serine 137. Residues 146-147 (QS) and tryptophan 191 each bind FMN. 197-199 (RLH) lines the substrate pocket. Residue arginine 201 coordinates FMN.

It belongs to the pyridoxamine 5'-phosphate oxidase family. In terms of assembly, homodimer. Requires FMN as cofactor.

The enzyme catalyses pyridoxamine 5'-phosphate + O2 + H2O = pyridoxal 5'-phosphate + H2O2 + NH4(+). The catalysed reaction is pyridoxine 5'-phosphate + O2 = pyridoxal 5'-phosphate + H2O2. It functions in the pathway cofactor metabolism; pyridoxal 5'-phosphate salvage; pyridoxal 5'-phosphate from pyridoxamine 5'-phosphate: step 1/1. Its pathway is cofactor metabolism; pyridoxal 5'-phosphate salvage; pyridoxal 5'-phosphate from pyridoxine 5'-phosphate: step 1/1. Catalyzes the oxidation of either pyridoxine 5'-phosphate (PNP) or pyridoxamine 5'-phosphate (PMP) into pyridoxal 5'-phosphate (PLP). This Escherichia coli O7:K1 (strain IAI39 / ExPEC) protein is Pyridoxine/pyridoxamine 5'-phosphate oxidase.